Here is a 185-residue protein sequence, read N- to C-terminus: Putative tyrosine-protein phosphatase OCA1 (185 aa).

The Tyrosine-protein phosphatase domain occupies 18–178; that stretch reads NFCPVEKQLY…TVEIGSGKGS (161 aa). The Phosphocysteine intermediate role is filled by cysteine 116.

The protein belongs to the protein-tyrosine phosphatase family.

It is found in the cytoplasm. The enzyme catalyses O-phospho-L-tyrosyl-[protein] + H2O = L-tyrosyl-[protein] + phosphate. Putative tyrosine-protein phosphatase required for protection against superoxide stress. The chain is Putative tyrosine-protein phosphatase OCA1 (OCA1) from Meyerozyma guilliermondii (strain ATCC 6260 / CBS 566 / DSM 6381 / JCM 1539 / NBRC 10279 / NRRL Y-324) (Yeast).